We begin with the raw amino-acid sequence, 150 residues long: Deoxyuridine 5'-triphosphate nucleotidohydrolase (150 aa).

Substrate-binding positions include 69 to 71 (RSG), N82, 86 to 88 (LID), and K96.

This sequence belongs to the dUTPase family. Requires Mg(2+) as cofactor.

It carries out the reaction dUTP + H2O = dUMP + diphosphate + H(+). The protein operates within pyrimidine metabolism; dUMP biosynthesis; dUMP from dCTP (dUTP route): step 2/2. This enzyme is involved in nucleotide metabolism: it produces dUMP, the immediate precursor of thymidine nucleotides and it decreases the intracellular concentration of dUTP so that uracil cannot be incorporated into DNA. The chain is Deoxyuridine 5'-triphosphate nucleotidohydrolase from Neisseria gonorrhoeae (strain NCCP11945).